The chain runs to 204 residues: Protein GET1 (204 aa).

The Lumenal segment spans residues 1–4; the sequence is MPSL. Residues 5-24 form a helical membrane-spanning segment; it reads LLIIFVTELVVQLVNTLGAT. At 25–110 the chain is on the cytoplasmic side; the sequence is TINDLLWRIY…KFDRTLTTTR (86 aa). Positions 72–107 form a coiled coil; the sequence is AKWAKLRRQHDKLLEDLEKKKASLEAARTKFDRTLT. A helical transmembrane segment spans residues 111-131; the sequence is TVSTRSVQWFLPFWYSKEPMF. At 132–155 the chain is on the lumenal side; the sequence is WLPYGWFPYYVEWFASFPRAPMGS. A helical transmembrane segment spans residues 156-172; the sequence is VSIVVWQWACTAVIALM. The Cytoplasmic portion of the chain corresponds to 173-204; it reads IEAATAALVYVAAKQSQKIRQPVPAQSEKKDS.

This sequence belongs to the WRB/GET1 family. Interacts with GET3.

It localises to the endoplasmic reticulum membrane. Required for the post-translational delivery of tail-anchored (TA) proteins to the endoplasmic reticulum. Acts as a membrane receptor for soluble GET3, which recognizes and selectively binds the transmembrane domain of TA proteins in the cytosol. The sequence is that of Protein GET1 from Podospora anserina (strain S / ATCC MYA-4624 / DSM 980 / FGSC 10383) (Pleurage anserina).